Reading from the N-terminus, the 201-residue chain is Recombination protein RecR (201 aa).

A C4-type zinc finger spans residues Cys-60–Cys-75. The 96-residue stretch at Ser-83–Pro-178 folds into the Toprim domain.

Belongs to the RecR family.

In terms of biological role, may play a role in DNA repair. It seems to be involved in an RecBC-independent recombinational process of DNA repair. It may act with RecF and RecO. In Rhodopseudomonas palustris (strain BisB18), this protein is Recombination protein RecR.